Consider the following 774-residue polypeptide: Ion-translocating oxidoreductase complex subunit C (774 aa).

4Fe-4S ferredoxin-type domains follow at residues 369–397 (GEPQ…QQLY) and 407–436 (KATT…VQYF). Residues Cys-377, Cys-380, Cys-383, Cys-387, Cys-416, Cys-419, Cys-422, and Cys-426 each contribute to the [4Fe-4S] cluster site. A disordered region spans residues 602 to 750 (KLEQQQANAE…EPEEQIDPRK (149 aa)).

It belongs to the 4Fe4S bacterial-type ferredoxin family. RnfC subfamily. In terms of assembly, the complex is composed of six subunits: RsxA, RsxB, RsxC, RsxD, RsxE and RsxG. The cofactor is [4Fe-4S] cluster.

The protein localises to the cell inner membrane. Part of a membrane-bound complex that couples electron transfer with translocation of ions across the membrane. Required to maintain the reduced state of SoxR. The protein is Ion-translocating oxidoreductase complex subunit C of Escherichia coli O6:K15:H31 (strain 536 / UPEC).